Here is a 120-residue protein sequence, read N- to C-terminus: Chaperonin GroEL (120 aa).

23–27 contributes to the ATP binding site; it reads DGTTT.

Belongs to the chaperonin (HSP60) family. As to quaternary structure, forms a cylinder of 14 subunits composed of two heptameric rings stacked back-to-back. Interacts with the co-chaperonin GroES.

Its subcellular location is the cytoplasm. It carries out the reaction ATP + H2O + a folded polypeptide = ADP + phosphate + an unfolded polypeptide.. Together with its co-chaperonin GroES, plays an essential role in assisting protein folding. The GroEL-GroES system forms a nano-cage that allows encapsulation of the non-native substrate proteins and provides a physical environment optimized to promote and accelerate protein folding. This Mycobacterium kansasii protein is Chaperonin GroEL.